The following is a 154-amino-acid chain: Probable chemoreceptor glutamine deamidase CheD (154 aa).

The protein belongs to the CheD family.

It catalyses the reaction L-glutaminyl-[protein] + H2O = L-glutamyl-[protein] + NH4(+). Functionally, probably deamidates glutamine residues to glutamate on methyl-accepting chemotaxis receptors (MCPs), playing an important role in chemotaxis. In Methanococcus maripaludis (strain DSM 14266 / JCM 13030 / NBRC 101832 / S2 / LL), this protein is Probable chemoreceptor glutamine deamidase CheD.